An 808-amino-acid polypeptide reads, in one-letter code: DNA ligase (808 aa).

The segment at 1–30 (MSISDDISPVPPAPVSEPNAGQDAGQDAAP) is disordered. Residues 18–30 (PNAGQDAGQDAAP) are compositionally biased toward low complexity. Residues 61 to 65 (DAEYD), 110 to 111 (SL), and D141 each bind NAD(+). The active-site N6-AMP-lysine intermediate is the K143. R164, E202, K334, and K358 together coordinate NAD(+). Positions 453, 456, 471, and 476 each coordinate Zn(2+). Residues 644-733 (EGSGPLAGLR…GGDVPEDGDG (90 aa)) enclose the BRCT domain. The interval 720–808 (LEGRGGDVPE…PRKKDQHSLL (89 aa)) is disordered. Positions 727-742 (VPEDGDGAPGNEDEAP) are enriched in acidic residues. A compositionally biased stretch (low complexity) spans 746 to 773 (ADVPAAPEVLADAPAAISADASSGVAPG). Residues 779–792 (DRADMTDRTVRTDS) are compositionally biased toward basic and acidic residues.

This sequence belongs to the NAD-dependent DNA ligase family. LigA subfamily. Requires Mg(2+) as cofactor. Mn(2+) is required as a cofactor.

The catalysed reaction is NAD(+) + (deoxyribonucleotide)n-3'-hydroxyl + 5'-phospho-(deoxyribonucleotide)m = (deoxyribonucleotide)n+m + AMP + beta-nicotinamide D-nucleotide.. Its function is as follows. DNA ligase that catalyzes the formation of phosphodiester linkages between 5'-phosphoryl and 3'-hydroxyl groups in double-stranded DNA using NAD as a coenzyme and as the energy source for the reaction. It is essential for DNA replication and repair of damaged DNA. This is DNA ligase from Nitratidesulfovibrio vulgaris (strain DSM 19637 / Miyazaki F) (Desulfovibrio vulgaris).